The following is a 561-amino-acid chain: Arginine--tRNA ligase (561 aa).

A 'HIGH' region motif is present at residues Ala128–His138.

This sequence belongs to the class-I aminoacyl-tRNA synthetase family. As to quaternary structure, monomer.

The protein resides in the cytoplasm. It carries out the reaction tRNA(Arg) + L-arginine + ATP = L-arginyl-tRNA(Arg) + AMP + diphosphate. This is Arginine--tRNA ligase from Chromohalobacter salexigens (strain ATCC BAA-138 / DSM 3043 / CIP 106854 / NCIMB 13768 / 1H11).